The primary structure comprises 185 residues: Ribosome-recycling factor (185 aa).

The protein belongs to the RRF family.

Its subcellular location is the cytoplasm. Responsible for the release of ribosomes from messenger RNA at the termination of protein biosynthesis. May increase the efficiency of translation by recycling ribosomes from one round of translation to another. This Streptococcus gordonii (strain Challis / ATCC 35105 / BCRC 15272 / CH1 / DL1 / V288) protein is Ribosome-recycling factor.